The sequence spans 486 residues: Probable glycine dehydrogenase (decarboxylating) subunit 2 (486 aa).

Lysine 273 carries the post-translational modification N6-(pyridoxal phosphate)lysine.

It belongs to the GcvP family. C-terminal subunit subfamily. As to quaternary structure, the glycine cleavage system is composed of four proteins: P, T, L and H. In this organism, the P 'protein' is a heterodimer of two subunits. Pyridoxal 5'-phosphate serves as cofactor.

It catalyses the reaction N(6)-[(R)-lipoyl]-L-lysyl-[glycine-cleavage complex H protein] + glycine + H(+) = N(6)-[(R)-S(8)-aminomethyldihydrolipoyl]-L-lysyl-[glycine-cleavage complex H protein] + CO2. Functionally, the glycine cleavage system catalyzes the degradation of glycine. The P protein binds the alpha-amino group of glycine through its pyridoxal phosphate cofactor; CO(2) is released and the remaining methylamine moiety is then transferred to the lipoamide cofactor of the H protein. The polypeptide is Probable glycine dehydrogenase (decarboxylating) subunit 2 (Alkaliphilus oremlandii (strain OhILAs) (Clostridium oremlandii (strain OhILAs))).